The following is a 194-amino-acid chain: Ribose 1,5-bisphosphate phosphokinase PhnN (194 aa).

An ATP-binding site is contributed by 24–31 (GPSGAGKD).

Belongs to the ribose 1,5-bisphosphokinase family.

The catalysed reaction is alpha-D-ribose 1,5-bisphosphate + ATP = 5-phospho-alpha-D-ribose 1-diphosphate + ADP. It participates in metabolic intermediate biosynthesis; 5-phospho-alpha-D-ribose 1-diphosphate biosynthesis; 5-phospho-alpha-D-ribose 1-diphosphate from D-ribose 5-phosphate (route II): step 3/3. Its function is as follows. Catalyzes the phosphorylation of ribose 1,5-bisphosphate to 5-phospho-D-ribosyl alpha-1-diphosphate (PRPP). This chain is Ribose 1,5-bisphosphate phosphokinase PhnN, found in Rhodopseudomonas palustris (strain ATCC BAA-98 / CGA009).